Reading from the N-terminus, the 310-residue chain is tRNA uridine(34) hydroxylase (310 aa).

Residues 124–218 (SDPEVLLIDT…YFEEVAQEES (95 aa)) enclose the Rhodanese domain. Catalysis depends on Cys-178, which acts as the Cysteine persulfide intermediate.

Belongs to the TrhO family.

The enzyme catalyses uridine(34) in tRNA + AH2 + O2 = 5-hydroxyuridine(34) in tRNA + A + H2O. Catalyzes oxygen-dependent 5-hydroxyuridine (ho5U) modification at position 34 in tRNAs. This is tRNA uridine(34) hydroxylase from Pseudomonas entomophila (strain L48).